The primary structure comprises 222 residues: Glutathione S-transferase U21 (222 aa).

The 81-residue stretch at 3 to 83 (AEVILLGFWP…YIDEVWSDNN (81 aa)) folds into the GST N-terminal domain. Residues 13–14 (SM), 40–41 (NK), 54–55 (TI), and 67–68 (ES) each bind glutathione. One can recognise a GST C-terminal domain in the interval 89 to 211 (DPYHRAQALF…LPDSEKVVGY (123 aa)).

It belongs to the GST superfamily. Tau family.

Its subcellular location is the cytoplasm. It localises to the cytosol. The catalysed reaction is RX + glutathione = an S-substituted glutathione + a halide anion + H(+). May be involved in the conjugation of reduced glutathione to a wide number of exogenous and endogenous hydrophobic electrophiles and have a detoxification role against certain herbicides. The chain is Glutathione S-transferase U21 (GSTU21) from Arabidopsis thaliana (Mouse-ear cress).